The chain runs to 218 residues: Superoxide dismutase [Mn], mitochondrial (218 aa).

Residues Met-1–Gly-21 constitute a mitochondrion transit peptide. Residues His-50 and His-96 each coordinate Mn(2+). Phosphoserine is present on Ser-129. Mn(2+) contacts are provided by Asp-181 and His-185.

It belongs to the iron/manganese superoxide dismutase family. Homodimer. Mn(2+) serves as cofactor.

The protein localises to the mitochondrion matrix. It catalyses the reaction 2 superoxide + 2 H(+) = H2O2 + O2. Destroys superoxide anion radicals which are normally produced within the cells and which are toxic to biological systems. The sequence is that of Superoxide dismutase [Mn], mitochondrial (sod2) from Schizosaccharomyces pombe (strain 972 / ATCC 24843) (Fission yeast).